The sequence spans 312 residues: Aspartate carbamoyltransferase catalytic subunit (312 aa).

Carbamoyl phosphate-binding residues include R57 and T58. An L-aspartate-binding site is contributed by K85. Positions 107, 135, and 138 each coordinate carbamoyl phosphate. The L-aspartate site is built by R168 and R222. Residues G264 and P265 each coordinate carbamoyl phosphate.

Belongs to the aspartate/ornithine carbamoyltransferase superfamily. ATCase family. As to quaternary structure, heterododecamer (2C3:3R2) of six catalytic PyrB chains organized as two trimers (C3), and six regulatory PyrI chains organized as three dimers (R2).

The catalysed reaction is carbamoyl phosphate + L-aspartate = N-carbamoyl-L-aspartate + phosphate + H(+). The protein operates within pyrimidine metabolism; UMP biosynthesis via de novo pathway; (S)-dihydroorotate from bicarbonate: step 2/3. In terms of biological role, catalyzes the condensation of carbamoyl phosphate and aspartate to form carbamoyl aspartate and inorganic phosphate, the committed step in the de novo pyrimidine nucleotide biosynthesis pathway. This is Aspartate carbamoyltransferase catalytic subunit from Carboxydothermus hydrogenoformans (strain ATCC BAA-161 / DSM 6008 / Z-2901).